The chain runs to 377 residues: MAAAAQSRVVRVLSMSRSAITAIATSVCHGPPCRQLHHALMPHGKGGRSSVSGIVATVFGATGFLGRYVVNHLGRMGSQVIIPYRCDKYDIMHLRPMGDLGQLLFLEWDARDKDSIRRVVQHSNVVINLIGRDWETKNFDFEDVFVKIPQAIAQLSKEAGVEKFIHVSHLNANIKSSSRYLRNKAVGEKVVRDAFPEAIIVKPSDIFGREDRFLNSFASMHRFGPIPLGSLGWKTVKQPVYVVDVSKGIVNAVKDPDANGKSFAFVGPSRYLLFHLVKYIFAVAHRLFLPFPLPLFAYRWVARVFEISPFEPWITRDKVERMHITDMKLPHLPGLEDLGIQATPLELKAIEVLRRHRTYRWLSAEIEDVKPAKTVNI.

The N-terminal 35 residues, 1–35 (MAAAAQSRVVRVLSMSRSAITAIATSVCHGPPCRQ), are a transit peptide targeting the mitochondrion. At Lys175 the chain carries N6-succinyllysine. N6-acetyllysine is present on residues Lys189 and Lys370.

The protein belongs to the complex I NDUFA9 subunit family. In terms of assembly, complex I is composed of 45 different subunits. This a component of the hydrophobic protein fraction. Interacts with BLOC1S1. Interacts with SLC2A4. Interacts with CLOCK. Interacts with RAB5IF. FAD is required as a cofactor. Acetylated on lysine residues. BLOC1S1 is required for acetylation. Acetylated by CLOCK in a circadian manner.

It is found in the mitochondrion matrix. Accessory subunit of the mitochondrial membrane respiratory chain NADH dehydrogenase (Complex I), that is believed not to be involved in catalysis. Required for proper complex I assembly. Complex I functions in the transfer of electrons from NADH to the respiratory chain. The immediate electron acceptor for the enzyme is believed to be ubiquinone. This Homo sapiens (Human) protein is NADH dehydrogenase [ubiquinone] 1 alpha subcomplex subunit 9, mitochondrial (NDUFA9).